The primary structure comprises 1500 residues: Synaptonemal complex protein 2 (1500 aa).

A phosphoserine mark is found at S457 and S458. T464 carries the phosphothreonine modification. S487 is subject to Phosphoserine. T496 carries the post-translational modification Phosphothreonine. S500, S509, S518, and S527 each carry phosphoserine. The tract at residues 512–548 (KAVSKTSESGMDYAASPKSRQSDGRKRWNNRANHNKT) is disordered. Phosphothreonine occurs at positions 608 and 633. S646, S650, and S741 each carry phosphoserine. Positions 796–820 (NPSDSMMSTRKLKEPQDGSGFSKKP) are disordered. S914 bears the Phosphoserine mark. T916 bears the Phosphothreonine mark. Disordered regions lie at residues 940–1010 (LMDY…TSES) and 1029–1084 (KEET…SASV). The span at 948–958 (NTTKYKSRKSR) shows a compositional bias: basic residues. Over residues 977–989 (MKNDYEVVVDGRT) the composition is skewed to basic and acidic residues. Residues 990 to 1000 (RLPRRATKTKK) are compositionally biased toward basic residues. Basic and acidic residues predominate over residues 1059–1076 (PSEEQKNSSRLREGREDS). 9 positions are modified to phosphoserine: S1115, S1117, S1124, S1133, S1140, S1144, S1156, S1159, and S1164. T1168 carries the phosphothreonine modification. 3 positions are modified to phosphoserine: S1183, S1213, and S1216. The tract at residues 1208–1234 (YMEPESPESCDNHMQNKREGNHAASPL) is disordered. Positions 1217-1228 (CDNHMQNKREGN) are enriched in basic and acidic residues. 3 positions are modified to phosphoserine: S1232, S1275, and S1277. T1313 carries the phosphothreonine modification. A coiled-coil region spans residues 1388 to 1429 (LLDELEKVEKDSQTLRDLEKELVDIEEKLVQKMRAYHRCERE).

It belongs to the SYCP2 family. Component of the lateral elements of synaptonemal complexes. Heterodimer with SYCP3. Interacts with SMC1A and SMC3. Interacts with TEX11. Phosphorylated. As to expression, detected in testis and spermatocytes (at protein level).

The protein localises to the nucleus. The protein resides in the chromosome. Functionally, major component of the axial/lateral elements of synaptonemal complexes (SCS) during meiotic prophase. Plays a role in the assembly of synaptonemal complexes. Required for normal meiotic chromosome synapsis during oocyte and spermatocyte development and for normal male and female fertility. Required for insertion of SYCP3 into synaptonemal complexes. May be involved in the organization of chromatin by temporarily binding to DNA scaffold attachment regions. Requires SYCP3, but not SYCP1, in order to be incorporated into the axial/lateral elements. The sequence is that of Synaptonemal complex protein 2 (Sycp2) from Mus musculus (Mouse).